The following is an 848-amino-acid chain: Trimethylamine-N-oxide reductase 1 (848 aa).

Positions 1-39 (MNNNDLFQASRRRFLAQLGGLTVAGMLGPSLLTPRRATA) form a signal peptide, tat-type signal. Mo-bis(molybdopterin guanine dinucleotide) is bound at residue S191.

Belongs to the prokaryotic molybdopterin-containing oxidoreductase family. Interacts with the N-terminal domain of TorC. Mo-bis(molybdopterin guanine dinucleotide) serves as cofactor. Exported by the Tat system. The position of the signal peptide cleavage has been experimentally proven.

It localises to the periplasm. It carries out the reaction trimethylamine + 2 Fe(III)-[cytochrome c] + H2O = trimethylamine N-oxide + 2 Fe(II)-[cytochrome c] + 3 H(+). Its function is as follows. Reduces trimethylamine-N-oxide (TMAO) into trimethylamine; an anaerobic reaction coupled to energy-yielding reactions. This chain is Trimethylamine-N-oxide reductase 1 (torA), found in Escherichia coli (strain K12).